The primary structure comprises 251 residues: Putative integrase/recombinase y4eF (251 aa).

In terms of domain architecture, Core-binding (CB) spans 1-40; the sequence is MLGREDIRTYQVYLANEKKLAPGSIHIALSALRFFFNVTL. Positions 58 to 231 constitute a Tyr recombinase domain; sequence KLPIILSPDE…ATNKVCATES (174 aa). Residues arginine 93, lysine 118, histidine 183, arginine 186, and histidine 209 contribute to the active site. Tyrosine 218 acts as the O-(3'-phospho-DNA)-tyrosine intermediate in catalysis.

This sequence belongs to the 'phage' integrase family.

The chain is Putative integrase/recombinase y4eF from Sinorhizobium fredii (strain NBRC 101917 / NGR234).